Consider the following 286-residue polypeptide: Phosphatidylserine decarboxylase proenzyme (286 aa).

Residues aspartate 90, histidine 147, and serine 252 each act as charge relay system; for autoendoproteolytic cleavage activity in the active site. The active-site Schiff-base intermediate with substrate; via pyruvic acid; for decarboxylase activity is serine 252. Position 252 is a pyruvic acid (Ser); by autocatalysis (serine 252).

This sequence belongs to the phosphatidylserine decarboxylase family. PSD-B subfamily. Prokaryotic type I sub-subfamily. Heterodimer of a large membrane-associated beta subunit and a small pyruvoyl-containing alpha subunit. Pyruvate serves as cofactor. Is synthesized initially as an inactive proenzyme. Formation of the active enzyme involves a self-maturation process in which the active site pyruvoyl group is generated from an internal serine residue via an autocatalytic post-translational modification. Two non-identical subunits are generated from the proenzyme in this reaction, and the pyruvate is formed at the N-terminus of the alpha chain, which is derived from the carboxyl end of the proenzyme. The autoendoproteolytic cleavage occurs by a canonical serine protease mechanism, in which the side chain hydroxyl group of the serine supplies its oxygen atom to form the C-terminus of the beta chain, while the remainder of the serine residue undergoes an oxidative deamination to produce ammonia and the pyruvoyl prosthetic group on the alpha chain. During this reaction, the Ser that is part of the protease active site of the proenzyme becomes the pyruvoyl prosthetic group, which constitutes an essential element of the active site of the mature decarboxylase.

Its subcellular location is the cell membrane. It carries out the reaction a 1,2-diacyl-sn-glycero-3-phospho-L-serine + H(+) = a 1,2-diacyl-sn-glycero-3-phosphoethanolamine + CO2. Its pathway is phospholipid metabolism; phosphatidylethanolamine biosynthesis; phosphatidylethanolamine from CDP-diacylglycerol: step 2/2. Functionally, catalyzes the formation of phosphatidylethanolamine (PtdEtn) from phosphatidylserine (PtdSer). The chain is Phosphatidylserine decarboxylase proenzyme from Pseudomonas fluorescens (strain SBW25).